A 468-amino-acid polypeptide reads, in one-letter code: MSTRETFKISLLAKMPKDVINQFLSKDKTPFSVLFLSLLVGILAGLVGTYFEQAVHLVSETRTDWLKSEIGSFLPLWLAAFLISAFLAFIGYFLVHRFAPEAAGSGIPEIEGAMDGMRPVRWWRVLPVKFFGGMGALGSGMVLGREGPTVQMGGAVGRMISDIFRVKNEDTRHSLLAAGAAGGLAAAFNAPLAGIMFVIEEMRPQFRYTLISVRAVIISAVAANIVFRVINGQDAVITMPQYDAPELSTLGLFLLLGALFGVFGVLFNYLITLAQDLFVKFHRNDRKRYLLTGSMIGGCFGLLLLYVPELTGGGISLIPTITNGGYGAGILLLLFVGRIFTTLLCFGSGAPGGIFAPMLALGTLFGYAFGLIAKVWFPELNIEPGMFAIAGMGALFAATVRAPITGILLVIEMTNNYHLILPLIITSLGAVIFAQLLGGQPIYSQLLHRTLKNQKLQQQDLPPQSPNS.

Residues 1 to 30 (MSTRETFKISLLAKMPKDVINQFLSKDKTP) are Cytoplasmic-facing. Residues 31 to 67 (FSVLFLSLLVGILAGLVGTYFEQAVHLVSETRTDWLK) form a helical membrane-spanning segment. The Periplasmic portion of the chain corresponds to 68–74 (SEIGSFL). The chain crosses the membrane as a helical span at residues 75-98 (PLWLAAFLISAFLAFIGYFLVHRF). Positions 104–108 (GSGIP) match the Selectivity filter part_1 motif. Residue S105 coordinates chloride. The segment at residues 107 to 114 (IPEIEGAM) is an intramembrane region (helical). Topologically, residues 115–121 (DGMRPVR) are cytoplasmic. 2 helical membrane-spanning segments follow: residues 122–139 (WWRVLPVKFFGGMGALGS) and 146–164 (EGPTVQMGGAVGRMISDIF). The short motif at 144 to 148 (GREGP) is the Selectivity filter part_2 element. The Cytoplasmic segment spans residues 165 to 174 (RVKNEDTRHS). 2 consecutive intramembrane regions (helical) follow at residues 175–187 (LLAAGAAGGLAAA) and 191–199 (PLAGIMFVI). Residues 200 to 212 (EEMRPQFRYTLIS) lie on the Cytoplasmic side of the membrane. Residues 213-230 (VRAVIISAVAANIVFRVI) traverse the membrane as a helical segment. The Periplasmic portion of the chain corresponds to 231–250 (NGQDAVITMPQYDAPELSTL). The helical transmembrane segment at 251 to 279 (GLFLLLGALFGVFGVLFNYLITLAQDLFV) threads the bilayer. Residues 280–285 (KFHRND) are Cytoplasmic-facing. Residues 286-307 (RKRYLLTGSMIGGCFGLLLLYV) form a helical membrane-spanning segment. Over 308-327 (PELTGGGISLIPTITNGGYG) the chain is Periplasmic. 2 helical membrane passes run 328–347 (AGILLLLFVGRIFTTLLCFG) and 353–374 (GIFAPMLALGTLFGYAFGLIAK). Residues 353–357 (GIFAP) carry the Selectivity filter part_3 motif. 2 residues coordinate chloride: I354 and F355. The Periplasmic portion of the chain corresponds to 375 to 384 (VWFPELNIEP). An intramembrane region (helical) is located at residues 385–399 (GMFAIAGMGALFAAT). An intramembrane region (note=Loop between two helices) is located at residues 400-402 (VRA). Positions 403–414 (PITGILLVIEMT) form an intramembrane region, helical. The note=Loop between two helices intramembrane region spans 415–419 (NNYHL). Residues 420–436 (ILPLIITSLGAVIFAQL) form a helical membrane-spanning segment. At 437–468 (LGGQPIYSQLLHRTLKNQKLQQQDLPPQSPNS) the chain is on the cytoplasmic side. Residue Y443 participates in chloride binding.

This sequence belongs to the chloride channel (TC 2.A.49) family. ClcA subfamily. Homodimer.

Its subcellular location is the cell inner membrane. It catalyses the reaction 2 chloride(in) + H(+)(out) = 2 chloride(out) + H(+)(in). Its function is as follows. Proton-coupled chloride transporter. Functions as antiport system and exchanges two chloride ions for 1 proton. Probably acts as an electrical shunt for an outwardly-directed proton pump that is linked to amino acid decarboxylation, as part of the extreme acid resistance (XAR) response. This Vibrio cholerae serotype O1 (strain ATCC 39541 / Classical Ogawa 395 / O395) protein is H(+)/Cl(-) exchange transporter ClcA.